The sequence spans 165 residues: Peptide methionine sulfoxide reductase MsrA (165 aa).

Residue cysteine 10 is part of the active site.

Belongs to the MsrA Met sulfoxide reductase family.

The enzyme catalyses L-methionyl-[protein] + [thioredoxin]-disulfide + H2O = L-methionyl-(S)-S-oxide-[protein] + [thioredoxin]-dithiol. It carries out the reaction [thioredoxin]-disulfide + L-methionine + H2O = L-methionine (S)-S-oxide + [thioredoxin]-dithiol. Has an important function as a repair enzyme for proteins that have been inactivated by oxidation. Catalyzes the reversible oxidation-reduction of methionine sulfoxide in proteins to methionine. The sequence is that of Peptide methionine sulfoxide reductase MsrA from Campylobacter jejuni subsp. jejuni serotype O:23/36 (strain 81-176).